The primary structure comprises 387 residues: Alpha-maltose-1-phosphate synthase (387 aa).

The protein belongs to the glycosyltransferase group 1 family.

It catalyses the reaction ADP-alpha-D-glucose + alpha-D-glucose 1-phosphate = alpha-maltose 1-phosphate + ADP + H(+). Its pathway is glycan biosynthesis; glycogen biosynthesis. Functionally, involved in the biosynthesis of the maltose-1-phosphate (M1P) building block required for alpha-glucan production by the key enzyme GlgE. Catalyzes the formation of an alpha-1,4 linkage between glucose from ADP-glucose and glucose 1-phosphate (G1P) to yield maltose-1-phosphate (M1P). In Mycolicibacterium smegmatis (strain ATCC 700084 / mc(2)155) (Mycobacterium smegmatis), this protein is Alpha-maltose-1-phosphate synthase.